Here is a 282-residue protein sequence, read N- to C-terminus: Elongation factor Ts (282 aa).

The involved in Mg(2+) ion dislocation from EF-Tu stretch occupies residues 81–84 (TDFV). Residues 218–270 (KPAQPAQVAEVAAAPPAEPVADQPAAEPPAESVAPEPVVAESADAEPAPAAEG) show a composition bias toward low complexity. Positions 218–282 (KPAQPAQVAE…SKKGSTKKKK (65 aa)) are disordered. Residues 273–282 (SKKGSTKKKK) are compositionally biased toward basic residues.

This sequence belongs to the EF-Ts family.

It is found in the cytoplasm. Its function is as follows. Associates with the EF-Tu.GDP complex and induces the exchange of GDP to GTP. It remains bound to the aminoacyl-tRNA.EF-Tu.GTP complex up to the GTP hydrolysis stage on the ribosome. In Synechococcus sp. (strain JA-3-3Ab) (Cyanobacteria bacterium Yellowstone A-Prime), this protein is Elongation factor Ts.